Consider the following 226-residue polypeptide: Elongation factor 1-delta (226 aa).

A disordered region spans residues 82 to 131; it reads SSVATPPVADTKASAAEDDDDDDVDLFGEETEEEKKASEERAAAVKASGK. The segment covering 97–113 has biased composition (acidic residues); sequence AEDDDDDDVDLFGEETE. The segment covering 114–124 has biased composition (basic and acidic residues); sequence EEKKASEERAA.

It belongs to the EF-1-beta/EF-1-delta family. EF-1 is composed of 4 subunits: alpha, beta (1B-alpha=beta'), delta (1B-beta), and gamma (1B-gamma).

Its function is as follows. EF-1-beta and EF-1-beta' stimulate the exchange of GDP bound to EF-1-alpha to GTP. The sequence is that of Elongation factor 1-delta from Spuriopimpinella brachycarpa (Chamnamul).